Here is a 317-residue protein sequence, read N- to C-terminus: tRNA dimethylallyltransferase (317 aa).

Residue 19 to 26 (GPTASGKS) participates in ATP binding. 21–26 (TASGKS) is a binding site for substrate. The interaction with substrate tRNA stretch occupies residues 44-47 (DSMQ).

It belongs to the IPP transferase family. As to quaternary structure, monomer. Mg(2+) is required as a cofactor.

The catalysed reaction is adenosine(37) in tRNA + dimethylallyl diphosphate = N(6)-dimethylallyladenosine(37) in tRNA + diphosphate. Functionally, catalyzes the transfer of a dimethylallyl group onto the adenine at position 37 in tRNAs that read codons beginning with uridine, leading to the formation of N6-(dimethylallyl)adenosine (i(6)A). The sequence is that of tRNA dimethylallyltransferase from Methylorubrum extorquens (strain PA1) (Methylobacterium extorquens).